Consider the following 312-residue polypeptide: Retinol dehydrogenase 8 (312 aa).

9–18 (LISGCSSGIG) contacts NADP(+). 3 helical membrane passes run 87–107 (VLVN…SLAA), 138–158 (IVVV…VYAA), and 170–190 (LAVQ…GPVV). A substrate-binding site is contributed by Ser-143. Tyr-156 (proton acceptor) is an active-site residue.

Belongs to the short-chain dehydrogenases/reductases (SDR) family. Detected in photoreceptor outer segments in the retina (at protein level).

It is found in the membrane. The enzyme catalyses all-trans-retinol + NADP(+) = all-trans-retinal + NADPH + H(+). Retinol dehydrogenase with a clear preference for NADP. Converts all-trans-retinal to all-trans-retinol. May play a role in the regeneration of visual pigment at high light intensity. This is Retinol dehydrogenase 8 (RDH8) from Bos taurus (Bovine).